Here is a 306-residue protein sequence, read N- to C-terminus: Probable dimethyladenosine transferase (306 aa).

S-adenosyl-L-methionine contacts are provided by histidine 30, leucine 32, glycine 57, glutamate 78, aspartate 106, and asparagine 121.

Belongs to the class I-like SAM-binding methyltransferase superfamily. rRNA adenine N(6)-methyltransferase family. In terms of assembly, part of the small subunit (SSU) processome, composed of more than 70 proteins and the RNA chaperone small nucleolar RNA (snoRNA) U3.

Its subcellular location is the nucleus. It localises to the nucleolus. It catalyses the reaction adenosine(1779)/adenosine(1780) in 18S rRNA + 4 S-adenosyl-L-methionine = N(6)-dimethyladenosine(1779)/N(6)-dimethyladenosine(1780) in 18S rRNA + 4 S-adenosyl-L-homocysteine + 4 H(+). Specifically dimethylates two adjacent adenosines in the loop of a conserved hairpin near the 3'-end of 18S rRNA in the 40S particle. Involved in the pre-rRNA processing steps leading to small-subunit rRNA production independently of its RNA-modifying catalytic activity. Part of the small subunit (SSU) processome, first precursor of the small eukaryotic ribosomal subunit. During the assembly of the SSU processome in the nucleolus, many ribosome biogenesis factors, an RNA chaperone and ribosomal proteins associate with the nascent pre-rRNA and work in concert to generate RNA folding, modifications, rearrangements and cleavage as well as targeted degradation of pre-ribosomal RNA by the RNA exosome. This Drosophila melanogaster (Fruit fly) protein is Probable dimethyladenosine transferase.